Consider the following 276-residue polypeptide: Diaminopimelate epimerase (276 aa).

The substrate site is built by Asn-13, Gln-46, and Asn-66. The active-site Proton donor is the Cys-75. Residues 76–77 (GN), Asn-159, Asn-192, and 210–211 (ER) each bind substrate. Catalysis depends on Cys-219, which acts as the Proton acceptor. 220 to 221 (GT) serves as a coordination point for substrate.

The protein belongs to the diaminopimelate epimerase family. As to quaternary structure, homodimer.

It is found in the cytoplasm. It catalyses the reaction (2S,6S)-2,6-diaminopimelate = meso-2,6-diaminopimelate. Its pathway is amino-acid biosynthesis; L-lysine biosynthesis via DAP pathway; DL-2,6-diaminopimelate from LL-2,6-diaminopimelate: step 1/1. Functionally, catalyzes the stereoinversion of LL-2,6-diaminopimelate (L,L-DAP) to meso-diaminopimelate (meso-DAP), a precursor of L-lysine and an essential component of the bacterial peptidoglycan. This Ectopseudomonas mendocina (strain ymp) (Pseudomonas mendocina) protein is Diaminopimelate epimerase.